The sequence spans 603 residues: UvrABC system protein C (603 aa).

The GIY-YIG domain maps to 15-92 (DQPGCYLMKD…IKKHDPRFNI (78 aa)). Residues 197-232 (KTVKNDLMKKMQEAAENMEFEKAGEFRDQINAIETT) form the UVR domain.

It belongs to the UvrC family. As to quaternary structure, interacts with UvrB in an incision complex.

Its subcellular location is the cytoplasm. The UvrABC repair system catalyzes the recognition and processing of DNA lesions. UvrC both incises the 5' and 3' sides of the lesion. The N-terminal half is responsible for the 3' incision and the C-terminal half is responsible for the 5' incision. The sequence is that of UvrABC system protein C from Listeria monocytogenes serotype 4b (strain CLIP80459).